The sequence spans 656 residues: Vi polysaccharide export protein VexE (656 aa).

May be involved in translocation of the Vi antigen. The sequence is that of Vi polysaccharide export protein VexE (vexE) from Salmonella typhi.